The sequence spans 338 residues: Phosphate acyltransferase (338 aa).

It belongs to the PlsX family. In terms of assembly, homodimer. Probably interacts with PlsY.

It localises to the cytoplasm. The catalysed reaction is a fatty acyl-[ACP] + phosphate = an acyl phosphate + holo-[ACP]. It participates in lipid metabolism; phospholipid metabolism. Catalyzes the reversible formation of acyl-phosphate (acyl-PO(4)) from acyl-[acyl-carrier-protein] (acyl-ACP). This enzyme utilizes acyl-ACP as fatty acyl donor, but not acyl-CoA. This Endomicrobium trichonymphae protein is Phosphate acyltransferase.